The following is a 100-amino-acid chain: uncharacterized protein (100 aa).

The first 23 residues, 1 to 23 (MKYVALAFVLSLVILQISAQVGA), serve as a signal peptide directing secretion.

In terms of tissue distribution, nacreous layer of shell (at protein level). Expressed primarily in the mantle with highest level in the mantle pallium and lower level in the mantle edge.

Its subcellular location is the secreted. This is an uncharacterized protein from Margaritifera margaritifera (Freshwater pearl mussel).